The following is an 88-amino-acid chain: Small ribosomal subunit protein uS15 (88 aa).

The protein belongs to the universal ribosomal protein uS15 family. In terms of assembly, part of the 30S ribosomal subunit. Forms a bridge to the 50S subunit in the 70S ribosome, contacting the 23S rRNA.

One of the primary rRNA binding proteins, it binds directly to 16S rRNA where it helps nucleate assembly of the platform of the 30S subunit by binding and bridging several RNA helices of the 16S rRNA. In terms of biological role, forms an intersubunit bridge (bridge B4) with the 23S rRNA of the 50S subunit in the ribosome. This Mycoplasma capricolum subsp. capricolum (strain California kid / ATCC 27343 / NCTC 10154) protein is Small ribosomal subunit protein uS15.